The sequence spans 184 residues: GTP cyclohydrolase 1 (184 aa).

Zn(2+) is bound by residues C75, H78, and C146.

The protein belongs to the GTP cyclohydrolase I family. Toroid-shaped homodecamer, composed of two pentamers of five dimers.

It catalyses the reaction GTP + H2O = 7,8-dihydroneopterin 3'-triphosphate + formate + H(+). The protein operates within cofactor biosynthesis; 7,8-dihydroneopterin triphosphate biosynthesis; 7,8-dihydroneopterin triphosphate from GTP: step 1/1. The polypeptide is GTP cyclohydrolase 1 (Chromohalobacter salexigens (strain ATCC BAA-138 / DSM 3043 / CIP 106854 / NCIMB 13768 / 1H11)).